The primary structure comprises 83 residues: Cytochrome b559 subunit alpha (83 aa).

A helical membrane pass occupies residues 21–35; it reads VIHSITIPSLFIAGW. Residue His-23 participates in heme binding.

It belongs to the PsbE/PsbF family. Heterodimer of an alpha subunit and a beta subunit. PSII is composed of 1 copy each of membrane proteins PsbA, PsbB, PsbC, PsbD, PsbE, PsbF, PsbH, PsbI, PsbJ, PsbK, PsbL, PsbM, PsbT, PsbX, PsbY, PsbZ, Psb30/Ycf12, at least 3 peripheral proteins of the oxygen-evolving complex and a large number of cofactors. It forms dimeric complexes. Heme b serves as cofactor.

Its subcellular location is the plastid. The protein localises to the chloroplast thylakoid membrane. In terms of biological role, this b-type cytochrome is tightly associated with the reaction center of photosystem II (PSII). PSII is a light-driven water:plastoquinone oxidoreductase that uses light energy to abstract electrons from H(2)O, generating O(2) and a proton gradient subsequently used for ATP formation. It consists of a core antenna complex that captures photons, and an electron transfer chain that converts photonic excitation into a charge separation. This chain is Cytochrome b559 subunit alpha, found in Psilotum nudum (Whisk fern).